A 366-amino-acid polypeptide reads, in one-letter code: Cyclic amide hydrolase (366 aa).

The tract at residues 1 to 103 is RU A; it reads MKVGVHKLAM…TLFTRAPDDG (103 aa). Residues R51 and 82–83 each bind substrate; that span reads SG. The segment at 110-247 is RU B; the sequence is RLALGIGITR…CEVLLFGNAP (138 aa). K160 is an active-site residue. Substrate contacts are provided by residues R192, 230 to 231, R327, and 346 to 347; these read SA and SG. S230 (nucleophile) is an active-site residue. An RU C region spans residues 253-366; that stretch reads FRIGHGVLKD…AAPIAAIVRA (114 aa).

This sequence belongs to the cyclic amide hydrolase (CyAH) family. In terms of assembly, homotetramer.

Its function is as follows. Cyclic amide hydrolase of unknown substrate specificity. Catalyzes the hydrolytic ring-opening of a cyclic amide. Does not act on cyanuric acid nor barbituric acid. The polypeptide is Cyclic amide hydrolase (Azorhizobium caulinodans (strain ATCC 43989 / DSM 5975 / JCM 20966 / LMG 6465 / NBRC 14845 / NCIMB 13405 / ORS 571)).